The chain runs to 479 residues: Probable glycine dehydrogenase (decarboxylating) subunit 2 (479 aa).

N6-(pyridoxal phosphate)lysine is present on K265.

It belongs to the GcvP family. C-terminal subunit subfamily. The glycine cleavage system is composed of four proteins: P, T, L and H. In this organism, the P 'protein' is a heterodimer of two subunits. The cofactor is pyridoxal 5'-phosphate.

The enzyme catalyses N(6)-[(R)-lipoyl]-L-lysyl-[glycine-cleavage complex H protein] + glycine + H(+) = N(6)-[(R)-S(8)-aminomethyldihydrolipoyl]-L-lysyl-[glycine-cleavage complex H protein] + CO2. In terms of biological role, the glycine cleavage system catalyzes the degradation of glycine. The P protein binds the alpha-amino group of glycine through its pyridoxal phosphate cofactor; CO(2) is released and the remaining methylamine moiety is then transferred to the lipoamide cofactor of the H protein. The protein is Probable glycine dehydrogenase (decarboxylating) subunit 2 of Pseudothermotoga lettingae (strain ATCC BAA-301 / DSM 14385 / NBRC 107922 / TMO) (Thermotoga lettingae).